Reading from the N-terminus, the 515-residue chain is Gamma aminobutyrate transaminase 1, mitochondrial (515 aa).

A mitochondrion-targeting transit peptide spans 1-57; it reads MAKISRLFGSTVKAAITAQAGFHGKRIPAVSSLQEHIVKSTPARYNSTQACLENDIS. 172 to 173 serves as a coordination point for pyridoxal 5'-phosphate; the sequence is GS. Tyrosine 205 contributes to the substrate binding site. A pyridoxal 5'-phosphate-binding site is contributed by aspartate 312. Position 341 (lysine 341) interacts with substrate. An N6-(pyridoxal phosphate)lysine modification is found at lysine 341.

Belongs to the class-III pyridoxal-phosphate-dependent aminotransferase family. Expressed in leaves, roots, stems, flowers and fruits.

Its subcellular location is the mitochondrion. The enzyme catalyses 4-aminobutanoate + pyruvate = succinate semialdehyde + L-alanine. It catalyses the reaction 4-aminobutanoate + glyoxylate = succinate semialdehyde + glycine. In terms of biological role, transaminase that degrades gamma-amino butyric acid (GABA) and uses pyruvate or glyoxylate as amino-group acceptor. Cannot use beta-alanine, ornithine, acetylornithine, serine, glycine, asparagine, glutamine, glutamate, valine, leucine, isoleucine, methionine, phenylalanine, histidine, lysine, arginine, aspartate, threonine, tyrosine, tryptophan, proline, or cysteine as amino donors. Acts predominantly in vegetative tissues. The protein is Gamma aminobutyrate transaminase 1, mitochondrial (GABA-TP1) of Solanum lycopersicum (Tomato).